A 341-amino-acid polypeptide reads, in one-letter code: MVANPGGGSTDAGGGPVRHIPVLLDEVLSALAPAPGKLILDGTFGAGGYSSAILAAGAEVIALDRDPTAIASGQAMVAAHGGRLKLVHSQFSHLADHAPQGGLDGVVLDIGVSSMQIDEAERGFSFQKNGPLDMRMSAAGVSAADVVNRAKVADLIRIFHFLGEESQAPRIAHAIEKRREEKPFETTRDLAGLIELVTPRKMKDKIHPATRVFQALRIFVNDELGELAQALFAAEAALKPGGRLVVVTFHSLEDRIVKKFFSDRAGKASGSRHLPVAHERAATFAAIGKPMVSASEAEAEINPRARSAKLRAGLRTEAAAEAADMSLFGFPNLASLGKLGG.

S-adenosyl-L-methionine-binding positions include 47–49 (GGY), Asp64, Phe91, Asp109, and Gln116.

The protein belongs to the methyltransferase superfamily. RsmH family.

It localises to the cytoplasm. The catalysed reaction is cytidine(1402) in 16S rRNA + S-adenosyl-L-methionine = N(4)-methylcytidine(1402) in 16S rRNA + S-adenosyl-L-homocysteine + H(+). Its function is as follows. Specifically methylates the N4 position of cytidine in position 1402 (C1402) of 16S rRNA. This chain is Ribosomal RNA small subunit methyltransferase H, found in Rhizobium leguminosarum bv. trifolii (strain WSM2304).